The sequence spans 847 residues: DNA mismatch repair protein MutS (847 aa).

602 to 609 (GPNMSGKS) is a binding site for ATP.

This sequence belongs to the DNA mismatch repair MutS family.

Its function is as follows. This protein is involved in the repair of mismatches in DNA. It is possible that it carries out the mismatch recognition step. This protein has a weak ATPase activity. The chain is DNA mismatch repair protein MutS from Streptococcus uberis (strain ATCC BAA-854 / 0140J).